A 175-amino-acid polypeptide reads, in one-letter code: Transcription factor E (175 aa).

Residues 3 to 88 (DNPLIQQVLF…TWKPSLEKLP (86 aa)) form the HTH TFE/IIEalpha-type domain.

The protein belongs to the TFE family. As to quaternary structure, monomer. Interaction with RNA polymerase subunits RpoF and RpoE is necessary for Tfe stimulatory transcription activity. Able to interact with Tbp and RNA polymerase in the absence of DNA promoter. Interacts both with the preinitiation and elongation complexes.

Functionally, transcription factor that plays a role in the activation of archaeal genes transcribed by RNA polymerase. Facilitates transcription initiation by enhancing TATA-box recognition by TATA-box-binding protein (Tbp), and transcription factor B (Tfb) and RNA polymerase recruitment. Not absolutely required for transcription in vitro, but particularly important in cases where Tbp or Tfb function is not optimal. It dynamically alters the nucleic acid-binding properties of RNA polymerases by stabilizing the initiation complex and destabilizing elongation complexes. Seems to translocate with the RNA polymerase following initiation and acts by binding to the non template strand of the transcription bubble in elongation complexes. The polypeptide is Transcription factor E (Methanococcus vannielii (strain ATCC 35089 / DSM 1224 / JCM 13029 / OCM 148 / SB)).